A 629-amino-acid polypeptide reads, in one-letter code: Bifunctional protein ArgHA (629 aa).

An argininosuccinate lyase region spans residues 1-499 (MALWGGRFSQ…NLPRSRSDLV (499 aa)). The N-acetyltransferase domain occupies 464–598 (ISIRAARLTD…EKVLKDCDMC (135 aa)). Positions 500–629 (KAVGTFAVTE…INLKAEKLAS (130 aa)) are amino-acid acetyltransferase.

This sequence in the N-terminal section; belongs to the lyase 1 family. Argininosuccinate lyase subfamily. It in the C-terminal section; belongs to the acetyltransferase family. ArgA subfamily.

It is found in the cytoplasm. It catalyses the reaction 2-(N(omega)-L-arginino)succinate = fumarate + L-arginine. It carries out the reaction L-glutamate + acetyl-CoA = N-acetyl-L-glutamate + CoA + H(+). It functions in the pathway amino-acid biosynthesis; L-arginine biosynthesis; N(2)-acetyl-L-ornithine from L-glutamate: step 1/4. The protein operates within amino-acid biosynthesis; L-arginine biosynthesis; L-arginine from L-ornithine and carbamoyl phosphate: step 3/3. This is Bifunctional protein ArgHA (argHA) from Moritella abyssi.